The chain runs to 308 residues: N-acetyl-gamma-glutamyl-phosphate reductase (308 aa).

Cysteine 117 is an active-site residue.

It belongs to the NAGSA dehydrogenase family. Type 2 subfamily.

Its subcellular location is the cytoplasm. The catalysed reaction is N-acetyl-L-glutamate 5-semialdehyde + phosphate + NADP(+) = N-acetyl-L-glutamyl 5-phosphate + NADPH + H(+). It participates in amino-acid biosynthesis; L-arginine biosynthesis; N(2)-acetyl-L-ornithine from L-glutamate: step 3/4. Its function is as follows. Catalyzes the NADPH-dependent reduction of N-acetyl-5-glutamyl phosphate to yield N-acetyl-L-glutamate 5-semialdehyde. The chain is N-acetyl-gamma-glutamyl-phosphate reductase from Sinorhizobium fredii (strain NBRC 101917 / NGR234).